We begin with the raw amino-acid sequence, 301 residues long: MGISLSPLLTVLSLLSGRWLELGNGQTVNMVQLPGGRFQMGTDSPDGRDGEGPVREVTVKPFAIDIFPVTNKDFREFVREKKYRTEAEVFGWSFVFEDLVSDELRNKATQRMQSLLWWLPVERAFWRQPAGPGSGIREKLEFPVVHVSWNDARAYCAWRGKRLPTEEEWEFAARGGLKGQVYPWGNKFQPNRTNLWQGKFPKGDKAEDGFHGVSPVNAFPPQNDYGLYDLVGNVWEWTASQYQAADQDMRVLRGASWIDTADGSANHRARVTTRMGNTPDSASDNLGFRCASGAGRPPGEL.

Positions 1-25 (MGISLSPLLTVLSLLSGRWLELGNG) are cleaved as a signal peptide. The cysteines at positions 156 and 290 are disulfide-linked. N-linked (GlcNAc...) asparagine glycosylation is present at N191. Ca(2+)-binding residues include N194, L195, D208, F210, D229, G232, V234, and E236. The span at 274–284 (RMGNTPDSASD) shows a compositional bias: polar residues. The disordered stretch occupies residues 274–301 (RMGNTPDSASDNLGFRCASGAGRPPGEL). A Non-canonical ER retention motif motif is present at residues 298-301 (PGEL).

It belongs to the sulfatase-modifying factor family. Homodimer and heterodimer with SUMF1.

Its subcellular location is the endoplasmic reticulum lumen. Its function is as follows. Lacks formylglycine generating activity and is unable to convert newly synthesized inactive sulfatases to their active form. Inhibits the activation of sulfatases by SUMF1. The polypeptide is Inactive C-alpha-formylglycine-generating enzyme 2 (Bos taurus (Bovine)).